The primary structure comprises 621 residues: Chaperone protein HtpG (621 aa).

Residues 1–328 form an a; substrate-binding region; it reads MKQEKKKFDA…SEDLPLNISR (328 aa). Residues 329-544 form a b region; the sequence is ESLQHNNVLE…EAAMDIRMER (216 aa). The disordered stretch occupies residues 479–498; sequence VDQATSSSEEKNKDDKKSDD. Positions 486–498 are enriched in basic and acidic residues; the sequence is SEEKNKDDKKSDD. The c stretch occupies residues 545–621; sequence FLIEQKQIAN…LNDIVQKAIL (77 aa).

The protein belongs to the heat shock protein 90 family. Homodimer.

Its subcellular location is the cytoplasm. Functionally, molecular chaperone. Has ATPase activity. This is Chaperone protein HtpG from Rickettsia bellii (strain OSU 85-389).